Here is a 307-residue protein sequence, read N- to C-terminus: Agmatinase (307 aa).

6 residues coordinate Mn(2+): His128, Asp151, His153, Asp155, Asp232, and Asp234.

Belongs to the arginase family. Agmatinase subfamily. Requires Mn(2+) as cofactor.

It catalyses the reaction agmatine + H2O = urea + putrescine. It participates in amine and polyamine biosynthesis; putrescine biosynthesis via agmatine pathway; putrescine from agmatine: step 1/1. Catalyzes the formation of putrescine from agmatine. The chain is Agmatinase from Neisseria gonorrhoeae (strain ATCC 700825 / FA 1090).